Here is a 363-residue protein sequence, read N- to C-terminus: Phosphoserine aminotransferase (363 aa).

Arg-42 provides a ligand contact to L-glutamate. Pyridoxal 5'-phosphate contacts are provided by residues 76–77 (GR), Trp-102, Thr-156, Asp-175, and Gln-198. Lys-199 carries the N6-(pyridoxal phosphate)lysine modification. Position 240–241 (240–241 (NT)) interacts with pyridoxal 5'-phosphate.

It belongs to the class-V pyridoxal-phosphate-dependent aminotransferase family. SerC subfamily. Homodimer. The cofactor is pyridoxal 5'-phosphate.

It is found in the cytoplasm. It carries out the reaction O-phospho-L-serine + 2-oxoglutarate = 3-phosphooxypyruvate + L-glutamate. It catalyses the reaction 4-(phosphooxy)-L-threonine + 2-oxoglutarate = (R)-3-hydroxy-2-oxo-4-phosphooxybutanoate + L-glutamate. Its pathway is amino-acid biosynthesis; L-serine biosynthesis; L-serine from 3-phospho-D-glycerate: step 2/3. The protein operates within cofactor biosynthesis; pyridoxine 5'-phosphate biosynthesis; pyridoxine 5'-phosphate from D-erythrose 4-phosphate: step 3/5. Catalyzes the reversible conversion of 3-phosphohydroxypyruvate to phosphoserine and of 3-hydroxy-2-oxo-4-phosphonooxybutanoate to phosphohydroxythreonine. The polypeptide is Phosphoserine aminotransferase (Shewanella baltica (strain OS223)).